The primary structure comprises 99 residues: Small ribosomal subunit protein bS16 (99 aa).

The interval 80 to 99 is disordered; the sequence is PPRQQNEAKRETAETAQPEA.

This sequence belongs to the bacterial ribosomal protein bS16 family.

In Thermomicrobium roseum (strain ATCC 27502 / DSM 5159 / P-2), this protein is Small ribosomal subunit protein bS16.